The primary structure comprises 273 residues: SAGA-associated factor 29 homolog B (273 aa).

An SGF29 C-terminal domain is found at 128–273 (EAYASLKGEQ…VVALPEGHRQ (146 aa)). Histone H3K4me3 N-terminus binding stretches follow at residues 171-173 (DEE) and 220-223 (GTTA). Positions 245-248 (FDDD) are histone H3K4me3 binding.

Belongs to the SGF29 family. In terms of tissue distribution, expressed in roots, rosette leaves, cauline leaves, stems and flowers.

It is found in the nucleus. In terms of biological role, chromatin reader component of the transcription regulatory histone acetylation (HAT) complex SAGA. The protein is SAGA-associated factor 29 homolog B of Arabidopsis thaliana (Mouse-ear cress).